The sequence spans 88 residues: MVVKTVRVLNRAGVHARPAALIVQAASRFDSKIMLVRDTIRVNAKSIMGVMAMAAGCGSELELVVEGPDEVAALSAIERLFQNKFEEE.

The region spanning 1–88 (MVVKTVRVLN…RLFQNKFEEE (88 aa)) is the HPr domain. The Pros-phosphohistidine intermediate role is filled by His-15. Ser-46 bears the Phosphoserine; by HPrK/P mark.

It belongs to the HPr family.

It is found in the cytoplasm. Phosphorylation on Ser-46 inhibits the phosphoryl transfer from enzyme I to HPr. In terms of biological role, general (non sugar-specific) component of the phosphoenolpyruvate-dependent sugar phosphotransferase system (sugar PTS). This major carbohydrate active-transport system catalyzes the phosphorylation of incoming sugar substrates concomitantly with their translocation across the cell membrane. The phosphoryl group from phosphoenolpyruvate (PEP) is transferred to the phosphoryl carrier protein HPr by enzyme I. Phospho-HPr then transfers it to the PTS EIIA domain. This is Phosphocarrier protein HPr (ptsH) from Treponema pallidum (strain Nichols).